We begin with the raw amino-acid sequence, 331 residues long: Phenylalanine--tRNA ligase alpha subunit (331 aa).

E252 lines the Mg(2+) pocket.

The protein belongs to the class-II aminoacyl-tRNA synthetase family. Phe-tRNA synthetase alpha subunit type 1 subfamily. Tetramer of two alpha and two beta subunits. Mg(2+) serves as cofactor.

It is found in the cytoplasm. It catalyses the reaction tRNA(Phe) + L-phenylalanine + ATP = L-phenylalanyl-tRNA(Phe) + AMP + diphosphate + H(+). This chain is Phenylalanine--tRNA ligase alpha subunit, found in Marinomonas sp. (strain MWYL1).